The chain runs to 278 residues: Large ribosomal subunit protein uL2 (278 aa).

The segment at 224 to 262 (VMNPVDHPLGGGEGRTSGGRHPVTPWGKPTKGFKTRKTR) is disordered.

The protein belongs to the universal ribosomal protein uL2 family. As to quaternary structure, part of the 50S ribosomal subunit. Forms a bridge to the 30S subunit in the 70S ribosome.

One of the primary rRNA binding proteins. Required for association of the 30S and 50S subunits to form the 70S ribosome, for tRNA binding and peptide bond formation. It has been suggested to have peptidyltransferase activity; this is somewhat controversial. Makes several contacts with the 16S rRNA in the 70S ribosome. The sequence is that of Large ribosomal subunit protein uL2 from Leptospira biflexa serovar Patoc (strain Patoc 1 / Ames).